Here is a 444-residue protein sequence, read N- to C-terminus: Methylenetetrahydrofolate--tRNA-(uracil-5-)-methyltransferase TrmFO (444 aa).

Gly10–Gly15 is an FAD binding site.

It belongs to the MnmG family. TrmFO subfamily. FAD serves as cofactor.

Its subcellular location is the cytoplasm. It catalyses the reaction uridine(54) in tRNA + (6R)-5,10-methylene-5,6,7,8-tetrahydrofolate + NADH + H(+) = 5-methyluridine(54) in tRNA + (6S)-5,6,7,8-tetrahydrofolate + NAD(+). The catalysed reaction is uridine(54) in tRNA + (6R)-5,10-methylene-5,6,7,8-tetrahydrofolate + NADPH + H(+) = 5-methyluridine(54) in tRNA + (6S)-5,6,7,8-tetrahydrofolate + NADP(+). In terms of biological role, catalyzes the folate-dependent formation of 5-methyl-uridine at position 54 (M-5-U54) in all tRNAs. The chain is Methylenetetrahydrofolate--tRNA-(uracil-5-)-methyltransferase TrmFO from Streptococcus pneumoniae (strain 70585).